Consider the following 119-residue polypeptide: Large ribosomal subunit protein bL20 (119 aa).

This sequence belongs to the bacterial ribosomal protein bL20 family.

Functionally, binds directly to 23S ribosomal RNA and is necessary for the in vitro assembly process of the 50S ribosomal subunit. It is not involved in the protein synthesizing functions of that subunit. This chain is Large ribosomal subunit protein bL20, found in Bacillus pumilus (strain SAFR-032).